Consider the following 339-residue polypeptide: FR-33289 synthase (339 aa).

Fe(2+)-binding residues include His-150, Asp-152, and His-288.

Belongs to the TfdA dioxygenase family. In terms of assembly, homodimer. Fe(2+) is required as a cofactor.

The catalysed reaction is 3-(N-acetyl-N-hydroxy)aminopropylphosphonate + 2-oxoglutarate + O2 = (R)-(3-(acetylhydroxyamino)-2-hydroxypropyl)phosphonate + succinate + CO2. Its pathway is antibiotic biosynthesis. Monooxygenase involved in the biosynthesis of the phosphonate antibiotic FR-33289, an antimalarial agent. Catalyzes the oxidative decarboxylation of the antibiotic FR-900098 (3-(N-acetyl-N-hydroxy)aminopropylphosphonate) to form FR-33289 ((R)-(3-(acetylhydroxyamino)-2-hydroxypropyl)phosphonate). The polypeptide is FR-33289 synthase (Streptomyces rubellomurinus (strain ATCC 31215)).